The sequence spans 138 residues: Large ribosomal subunit protein uL16 (138 aa).

A compositionally biased stretch (basic residues) spans 1–15 (MLSPRKVKYRKKQRG). The interval 1 to 21 (MLSPRKVKYRKKQRGRLSGEA) is disordered.

Belongs to the universal ribosomal protein uL16 family. As to quaternary structure, part of the 50S ribosomal subunit.

Its function is as follows. Binds 23S rRNA and is also seen to make contacts with the A and possibly P site tRNAs. The chain is Large ribosomal subunit protein uL16 from Borrelia duttonii (strain Ly).